The chain runs to 192 residues: Aminodeoxychorismate synthase component 2 (192 aa).

Residues 3–192 (SVLMIDNCDS…LANLIHRPCH (190 aa)) enclose the Glutamine amidotransferase type-1 domain. Catalysis depends on residues cysteine 83, histidine 170, and glutamate 172.

Monomer. Heterodimer consisting of two non-identical subunits: a glutamine amidotransferase subunit (PabA) and a aminodeoxychorismate synthase subunit (PabB).

It carries out the reaction chorismate + L-glutamine = 4-amino-4-deoxychorismate + L-glutamate. The protein operates within cofactor biosynthesis; tetrahydrofolate biosynthesis; 4-aminobenzoate from chorismate: step 1/2. In terms of biological role, part of a heterodimeric complex that catalyzes the two-step biosynthesis of 4-amino-4-deoxychorismate (ADC), a precursor of p-aminobenzoate (PABA) and tetrahydrofolate. In the first step, a glutamine amidotransferase (PabA) generates ammonia as a substrate that, along with chorismate, is used in the second step, catalyzed by aminodeoxychorismate synthase (PabB) to produce ADC. PabA converts glutamine into glutamate only in the presence of stoichiometric amounts of PabB. The polypeptide is Aminodeoxychorismate synthase component 2 (Streptomyces lividans).